We begin with the raw amino-acid sequence, 315 residues long: DNA-directed RNA polymerase subunit alpha (315 aa).

An alpha N-terminal domain (alpha-NTD) region spans residues 1–228 (MLEIEKPIIE…EHFKLFMSLT (228 aa)). Residues 245-315 (KEKVLEMTVE…LGLCLKLNDE (71 aa)) form an alpha C-terminal domain (alpha-CTD) region.

This sequence belongs to the RNA polymerase alpha chain family. Homodimer. The RNAP catalytic core consists of 2 alpha, 1 beta, 1 beta' and 1 omega subunit. When a sigma factor is associated with the core the holoenzyme is formed, which can initiate transcription.

The catalysed reaction is RNA(n) + a ribonucleoside 5'-triphosphate = RNA(n+1) + diphosphate. DNA-dependent RNA polymerase catalyzes the transcription of DNA into RNA using the four ribonucleoside triphosphates as substrates. The protein is DNA-directed RNA polymerase subunit alpha of Clostridium botulinum (strain Alaska E43 / Type E3).